The sequence spans 212 residues: MKWKEFIINETKQSYLKNIIKKINNIENHQVVFPLKKQRFRCFDFFDIEQTKVVILGQDPYHTPKIANGLCFSVDLGNNLPGSLINIFKALEYDLQIKRTNPDLSDWAKQGVLLLNTVLTVNAHQPNSHKNFGYEELIKNVFNELRKQKHVVYLLWGKQAMSYINLIDQKQNLILCASHPSPLSAHRGFLTCKHFSKCNDYLIKHLRTPIKW.

Residue D59 is the Proton acceptor of the active site.

The protein belongs to the uracil-DNA glycosylase (UDG) superfamily. UNG family.

It localises to the cytoplasm. It catalyses the reaction Hydrolyzes single-stranded DNA or mismatched double-stranded DNA and polynucleotides, releasing free uracil.. Its function is as follows. Excises uracil residues from the DNA which can arise as a result of misincorporation of dUMP residues by DNA polymerase or due to deamination of cytosine. This chain is Uracil-DNA glycosylase (ung), found in Ureaplasma parvum serovar 3 (strain ATCC 700970).